We begin with the raw amino-acid sequence, 173 residues long: Small ribosomal subunit protein uS7 (173 aa).

It belongs to the universal ribosomal protein uS7 family. Part of the 30S ribosomal subunit. Contacts proteins S9 and S11.

One of the primary rRNA binding proteins, it binds directly to 16S rRNA where it nucleates assembly of the head domain of the 30S subunit. Is located at the subunit interface close to the decoding center, probably blocks exit of the E-site tRNA. In Orientia tsutsugamushi (strain Boryong) (Rickettsia tsutsugamushi), this protein is Small ribosomal subunit protein uS7.